The following is a 565-amino-acid chain: Deformed epidermal autoregulatory factor 1 homolog (565 aa).

2 disordered regions span residues 34–62 (GGEA…ETPR) and 162–190 (GLKG…KGGT). Positions 169–181 (PLTPGPQSPPTPL) are enriched in pro residues. T171 carries the post-translational modification Phosphothreonine. Position 176 is a phosphoserine (S176). At T179 the chain carries Phosphothreonine. Positions 193-273 (NWDPSVYDSE…QCLIQDGILN (81 aa)) constitute an SAND domain. The short motif at 301–316 (KRRKKENELPTTPVKK) is the Nuclear localization signal element. The segment at 403–478 (IAPFPEAALP…QLKTLFEQAK (76 aa)) is interaction with LMO4. Phosphothreonine is present on T432. Position 448 is a phosphoserine (S448). C504, C507, C515, C518, C524, C528, H536, and C540 together coordinate Zn(2+). The MYND-type zinc-finger motif lies at 504–540 (CVNCGREAMSECTGCHKVNYCSTFCQRKDWKDHQHIC).

As to quaternary structure, homodimer. Isoform 1 and isoform 4 may form a heterodimer. Interacts with LMO2 and CLIM2. Interacts with LMO4; LMO4 blocks export from nucleus. May interact with the corepressors NCOR1 and NCRO2. Identified in a complex with the XRCC5 and XRCC6 heterodimer. Interacts (via the SAND domain) with the DNA-PK complex subunit XRCC6; the interaction is direct and may be inhibited by DNA-binding. May be phosphorylated by DNA-PK complex in a DNA independent manner (in vitro). In terms of tissue distribution, expressed in various tissues and cells such as in peripheral mononuclear cells and hormone-secreting pituitary cells. Expression in pancreatic lymph nodes of patients with type 1 diabetes is 20 times higher than in healthy controls. Highly expressed in fetal and adult brain.

It localises to the nucleus. Its subcellular location is the cytoplasm. The protein resides in the secreted. Functionally, transcription factor that binds to sequence with multiple copies of 5'-TTC[CG]G-3' present in its own promoter and that of the HNRPA2B1 gene. Down-regulates transcription of these genes. Binds to the retinoic acid response element (RARE) 5'-AGGGTTCACCGAAAGTTCA-3'. Activates the proenkephalin gene independently of promoter binding, probably through protein-protein interaction. When secreted, behaves as an inhibitor of cell proliferation, by arresting cells in the G0 or G1 phase. Required for neural tube closure and skeletal patterning. Regulates epithelial cell proliferation and side-branching in the mammary gland. Controls the expression of peripheral tissue antigens in pancreatic lymph nodes. Isoform 1 displays greater transcriptional activity than isoform 4. Isoform 4 may inhibit transcriptional activity of isoform 1 by interacting with isoform 1 and retaining it in the cytoplasm. Transcriptional activator of EIF4G3. The sequence is that of Deformed epidermal autoregulatory factor 1 homolog (DEAF1) from Homo sapiens (Human).